A 377-amino-acid chain; its full sequence is Putative F-box protein At1g70380 (377 aa).

Positions 3 to 48 (NTSFETLALDMQIEILARLPLKYLMRCMCVSKKWASLIRGEDFRSA) constitute an F-box domain.

In Arabidopsis thaliana (Mouse-ear cress), this protein is Putative F-box protein At1g70380.